Here is a 201-residue protein sequence, read N- to C-terminus: 3-isopropylmalate dehydratase small subunit (201 aa).

It belongs to the LeuD family. LeuD type 1 subfamily. As to quaternary structure, heterodimer of LeuC and LeuD.

The enzyme catalyses (2R,3S)-3-isopropylmalate = (2S)-2-isopropylmalate. The protein operates within amino-acid biosynthesis; L-leucine biosynthesis; L-leucine from 3-methyl-2-oxobutanoate: step 2/4. Catalyzes the isomerization between 2-isopropylmalate and 3-isopropylmalate, via the formation of 2-isopropylmaleate. The sequence is that of 3-isopropylmalate dehydratase small subunit from Cytophaga hutchinsonii (strain ATCC 33406 / DSM 1761 / CIP 103989 / NBRC 15051 / NCIMB 9469 / D465).